A 342-amino-acid polypeptide reads, in one-letter code: SH3 domain-containing YSC84-like protein 1 (342 aa).

The segment at Gly218–Tyr266 is disordered. Basic and acidic residues predominate over residues Ala226 to Pro239. Positions Arg245–Arg263 are enriched in polar residues. In terms of domain architecture, SH3 spans Asn283 to Asn342.

This sequence belongs to the SH3YL1 family. In terms of assembly, interacts with SH3D19.

The polypeptide is SH3 domain-containing YSC84-like protein 1 (SH3YL1) (Homo sapiens (Human)).